A 214-amino-acid polypeptide reads, in one-letter code: Pyridoxine/pyridoxamine 5'-phosphate oxidase (214 aa).

Substrate-binding positions include 9–12 (RREY) and lysine 67. FMN is bound by residues 62 to 67 (RTVLLK), 77 to 78 (YS), arginine 83, lysine 84, and glutamine 106. Tyrosine 124, arginine 128, and serine 132 together coordinate substrate. FMN-binding positions include 141 to 142 (QS) and tryptophan 186. 192–194 (RLH) contributes to the substrate binding site. Arginine 196 is an FMN binding site.

Belongs to the pyridoxamine 5'-phosphate oxidase family. Homodimer. The cofactor is FMN.

The catalysed reaction is pyridoxamine 5'-phosphate + O2 + H2O = pyridoxal 5'-phosphate + H2O2 + NH4(+). It catalyses the reaction pyridoxine 5'-phosphate + O2 = pyridoxal 5'-phosphate + H2O2. The protein operates within cofactor metabolism; pyridoxal 5'-phosphate salvage; pyridoxal 5'-phosphate from pyridoxamine 5'-phosphate: step 1/1. Its pathway is cofactor metabolism; pyridoxal 5'-phosphate salvage; pyridoxal 5'-phosphate from pyridoxine 5'-phosphate: step 1/1. Catalyzes the oxidation of either pyridoxine 5'-phosphate (PNP) or pyridoxamine 5'-phosphate (PMP) into pyridoxal 5'-phosphate (PLP). In Porphyromonas gingivalis (strain ATCC 33277 / DSM 20709 / CIP 103683 / JCM 12257 / NCTC 11834 / 2561), this protein is Pyridoxine/pyridoxamine 5'-phosphate oxidase.